A 296-amino-acid polypeptide reads, in one-letter code: Prostate androgen-regulated mucin-like protein 1 homolog (296 aa).

The N-terminal stretch at 1-20 (MVCKALITLCIFAAGLRVQG) is a signal peptide. Residues 21–244 (SPTPTLLPVS…EVENALSSGS (224 aa)) lie on the Extracellular side of the membrane. N62, N96, and N108 each carry an N-linked (GlcNAc...) asparagine glycan. Residues 73–220 (LTSQLPTHPR…SPQDTEPGKV (148 aa)) form a disordered region. A compositionally biased stretch (basic and acidic residues) spans 80-96 (HPREEAVTSPPLKREVN). Residues 97–111 (STDSSPTGFSSNSSG) are compositionally biased toward low complexity. Over residues 125–145 (SPETSVPATGSQSPTLLFSQG) the composition is skewed to polar residues. Low complexity-rich tracts occupy residues 146 to 175 (PTSA…TVNN) and 195 to 205 (SHTPTSHVTEP). Residue N168 is glycosylated (N-linked (GlcNAc...) asparagine). The span at 206–217 (VPKEKSPQDTEP) shows a compositional bias: basic and acidic residues. The helical transmembrane segment at 245 to 265 (IAAITVTVIAVVLLVFGAAAY) threads the bilayer. Residues 266 to 296 (LKIRHSSYGRLLDDHDYGSWGNYNNPLYDDS) lie on the Cytoplasmic side of the membrane. S284 carries the phosphoserine modification.

Belongs to the PARM family. In terms of processing, highly N-glycosylated and O-glycosylated. As to expression, expressed in prostate. Detected in other organs at low levels, these include the heart and various tissues of the urogenital tract. Not detected in mammary gland.

It localises to the cell membrane. It is found in the golgi apparatus membrane. The protein localises to the endosome membrane. May regulate TLP1 expression and telomerase activity, thus enabling certain prostatic cells to resist apoptosis. The protein is Prostate androgen-regulated mucin-like protein 1 homolog (Parm1) of Rattus norvegicus (Rat).